Consider the following 1486-residue polypeptide: Collagen alpha-1(II) chain (1486 aa).

The first 26 residues, 1-26, serve as a signal peptide directing secretion; that stretch reads MFSFVDSRTLVLFAATQVILLAVVRC. The propeptide at 27-183 is N-terminal propeptide; the sequence is QDEEDVLDTG…PPGLGGNFAA (157 aa). Residues 36–94 enclose the VWFC domain; sequence GSCVQHGQRYSDKDVWKPEPCQICVCDTGTVLCDDIICEESKDCPNAEIPFGECCPICP. The segment at 100 to 1241 is disordered; that stretch reads TSSGQGVLKG…EKGPDPMRYM (1142 aa). 2 stretches are compositionally biased toward basic and acidic residues: residues 110-121 and 138-159; these read QKGEPGDIKDVL and SRGE…RDGE. Residues 163 to 175 are compositionally biased toward pro residues; sequence PGNPGPVGPPGPP. The segment covering 194–205 has biased composition (low complexity); the sequence is GGAQMGVMQGPM. A triple-helical region region spans residues 203–1216; the sequence is GPMGPMGPRG…PGPPGPPGPP (1014 aa). Residues 210–219 show a composition bias toward pro residues; that stretch reads PRGPPGPTGA. The span at 220–231 shows a compositional bias: low complexity; sequence PGPQGFQGNPGE. Positions 233-242 are enriched in gly residues; it reads GEPGAGGPMG. Positions 253 to 267 are enriched in basic and acidic residues; sequence PGDDGEAGKPGKSGE. Over residues 308–317 the composition is skewed to gly residues; the sequence is GAKGEGGATG. Low complexity-rich tracts occupy residues 318–330, 337–346, 363–373, and 393–421; these read EAGS…PRGL, PGSSGAAGAR, PAGAPGFPGAP, and PRGE…PGAK. The span at 422 to 431 shows a compositional bias: gly residues; it reads GSSGGPGIAG. Residues 435-444 are compositionally biased toward pro residues; it reads FPGPRGPPGP. Composition is skewed to low complexity over residues 478–487 and 498–517; these read AGPQGAPGPA and EPGA…PGNR. The segment covering 536-551 has biased composition (gly residues); sequence GVPGLGGPKGGNGDPG. 4-hydroxyproline is present on residues Pro-661 and Pro-670. Position 672 is a 3-hydroxyproline (Pro-672). Residues Pro-673 and Pro-676 each carry the 4-hydroxyproline modification. Residues 708–732 show a composition bias toward low complexity; that stretch reads ERGSSGPQGLQGPRGLPGTPGTDGP. The span at 766–777 shows a compositional bias: basic and acidic residues; it reads KGDRGDTGEKGP. Residues 891 to 904 are compositionally biased toward low complexity; that stretch reads AQGPAGATGFPGAA. A 4-hydroxyproline mark is found at Pro-910, Pro-916, and Pro-922. Positions 913 to 922 are enriched in pro residues; the sequence is NGNPGPPGPP. Low complexity predominate over residues 936 to 955; it reads DAGPPGRAGDPGLQGAAGAP. A compositionally biased stretch (gly residues) spans 1007–1016; that stretch reads GKQGGPGSSG. Low complexity predominate over residues 1102–1116; sequence SGPAGARGLAGPQGP. Residues 1117–1131 show a composition bias toward basic and acidic residues; it reads RGDKGEAGEAGERGQ. Pro-1146 carries the 3-hydroxyproline modification. A compositionally biased stretch (low complexity) spans 1150–1159; that stretch reads AGDQGATGPA. Position 1188 is a 3-hydroxyproline (Pro-1188). Pro-1189 carries the post-translational modification 4-hydroxyproline. Pro residues predominate over residues 1201–1218; that stretch reads SGPPGQPGPPGPPGPPGP. A 3-hydroxyproline modification is found at Pro-1203. Pro-1204 and Pro-1207 each carry 4-hydroxyproline. Pro-1209 carries the post-translational modification 3-hydroxyproline. Residues Pro-1210 and Pro-1213 each carry the 4-hydroxyproline modification. Pro-1215 is modified (3-hydroxyproline). Pro-1216 carries the 4-hydroxyproline modification. The tract at residues 1217 to 1243 is nonhelical region (C-terminal); sequence GPGIDMSAFAGLSQPEKGPDPMRYMRA. Positions 1244 to 1486 are cleaved as a propeptide — C-terminal propeptide; it reads DQASNSLPVD…GVDIGPVCFL (243 aa). The region spanning 1252–1486 is the Fibrillar collagen NC1 domain; sequence VDVEATLKSL…GVDIGPVCFL (235 aa). 3 disulfides stabilise this stretch: Cys-1282–Cys-1314, Cys-1322–Cys-1484, and Cys-1392–Cys-1437. Residues Asp-1300, Asn-1302, Gln-1303, Cys-1305, and Asp-1308 each coordinate Ca(2+). N-linked (GlcNAc...) asparagine glycosylation is present at Asn-1387.

Belongs to the fibrillar collagen family. In terms of assembly, homotrimers of alpha 1(II) chains. Contains mostly 4-hydroxyproline. Prolines at the third position of the tripeptide repeating unit (G-X-P) are 4-hydroxylated in some or all of the chains. Post-translationally, contains 3-hydroxyproline at a few sites. This modification occurs on the first proline residue in the sequence motif Gly-Pro-Hyp, where Hyp is 4-hydroxyproline. In terms of processing, lysine residues at the third position of the tripeptide repeating unit (G-X-Y) are 5-hydroxylated in some or all of the chains. O-glycosylated on hydroxylated lysine residues. The O-linked glycan consists of a Glc-Gal disaccharide.

Its subcellular location is the secreted. The protein localises to the extracellular space. It is found in the extracellular matrix. Functionally, type II collagen is specific for cartilaginous tissues. It is essential for the normal embryonic development of the skeleton, for linear growth and for the ability of cartilage to resist compressive forces. The polypeptide is Collagen alpha-1(II) chain (Xenopus laevis (African clawed frog)).